A 179-amino-acid chain; its full sequence is Alpha-S2-casein-like A (179 aa).

The first 15 residues, 1 to 15, serve as a signal peptide directing secretion; sequence MKFFIFTCLVAAALA. A phosphoserine mark is found at serine 24 and serine 25. Residues 44–121 are disordered; sequence FQTPQDSASS…NAIYDVPSQE (78 aa). Residues 63–74 show a composition bias toward basic and acidic residues; that stretch reads ISEKIEQSEEQK. Over residues 93-110 the composition is skewed to polar residues; it reads PQICTPYQQQSSVNQRPQ.

The protein belongs to the alpha-casein family. As to expression, mammary gland specific. Secreted in milk.

The protein resides in the secreted. In terms of biological role, important role in the capacity of milk to transport calcium phosphate. The protein is Alpha-S2-casein-like A (Csn1s2a) of Rattus norvegicus (Rat).